A 599-amino-acid chain; its full sequence is Protein ref(2)P (599 aa).

In terms of domain architecture, PB1 spans 3–88; it reads EKLLKITYQG…CESNMHVQVA (86 aa). The ZZ-type zinc-finger motif lies at 122-173; the sequence is HDSVQCDGCGLAPLIGFRYKCVQCSNFDLCQKCESAHKHPEHLMLRMPTNNG. Zn(2+) is bound by residues Cys-127, Cys-130, Cys-142, Cys-145, Cys-151, Cys-154, His-160, and His-163. 4 disordered regions span residues 192 to 225, 245 to 319, 357 to 453, and 507 to 544; these read RRSRGHCPFQEASQPAPAAEPARDSRRERRHARR, TTAT…INLD, GIFA…LDPE, and ASANTQTAQVDTVSTSTSTTSVTTNSVGTSPAAPDDKR. The span at 199 to 211 shows a compositional bias: low complexity; that stretch reads PFQEASQPAPAAE. Basic and acidic residues predominate over residues 276 to 286; the sequence is KATESEAKPTE. Residues 291–319 are compositionally biased toward polar residues; the sequence is NTDQSVPTTEDPVTTPRSTEPTTPVINLD. Positions 375-411 are enriched in low complexity; it reads QSQSSGQSAASSASQSAVPSAAPSANQSNVPSANQSA. Repeat copies occupy residues 386–393, 399–406, and 407–413. The segment at 386–413 is 3 X 8 AA repeats of S-A-N-Q-S-X-X-P; it reads SASQSAVPSAAPSANQSNVPSANQSATP. The segment covering 412-423 has biased composition (polar residues); it reads TPSISGSISDAQ. Over residues 511–536 the composition is skewed to low complexity; the sequence is TQTAQVDTVSTSTSTTSVTTNSVGTS. The UBA domain occupies 550 to 595; it reads HTDERINQSIHAMMAMGFSNEGAWLTQLLESVQGNIPAALDVMHVS.

In terms of assembly, interacts with aPKC and Traf6.

It localises to the nucleus. The protein localises to the cytoplasm. Required for selective autophagy activation by ubiquitinated proteins. Implicated in sigma rhabdovirus multiplication and necessary for male fertility. Involved in activating transcription of Drs. The sequence is that of Protein ref(2)P (ref(2)P) from Drosophila simulans (Fruit fly).